The sequence spans 119 residues: Non-structural protein 3b (119 aa).

The DRBM domain maps to aspartate 2–alanine 83.

As to quaternary structure, interacts with host RUNX1 isoform b.

Its subcellular location is the host nucleus. It is found in the host nucleolus. It localises to the host mitochondrion. Functionally, induces host cell G0/G1 arrest and apoptosis. This chain is Non-structural protein 3b, found in Tylonycteris pachypus (Lesser bamboo bat).